A 288-amino-acid chain; its full sequence is Sulfur carrier protein FdhD (288 aa).

A disordered region spans residues 1–23; sequence MMRCMQSPEVHPAAAGDAEPPTH. The Cysteine persulfide intermediate role is filled by Cys127.

Belongs to the FdhD family.

The protein resides in the cytoplasm. In terms of biological role, required for formate dehydrogenase (FDH) activity. Acts as a sulfur carrier protein that transfers sulfur from IscS to the molybdenum cofactor prior to its insertion into FDH. The sequence is that of Sulfur carrier protein FdhD from Cupriavidus necator (strain ATCC 17699 / DSM 428 / KCTC 22496 / NCIMB 10442 / H16 / Stanier 337) (Ralstonia eutropha).